Consider the following 858-residue polypeptide: DNA mismatch repair protein MutS (858 aa).

609–616 (GPNMSGKS) is an ATP binding site.

This sequence belongs to the DNA mismatch repair MutS family.

This protein is involved in the repair of mismatches in DNA. It is possible that it carries out the mismatch recognition step. This protein has a weak ATPase activity. In Enterococcus faecalis (strain ATCC 700802 / V583), this protein is DNA mismatch repair protein MutS.